A 129-amino-acid chain; its full sequence is UPF0225 protein XOO0258 (129 aa).

The protein belongs to the UPF0225 family.

In Xanthomonas oryzae pv. oryzae (strain MAFF 311018), this protein is UPF0225 protein XOO0258.